The sequence spans 780 residues: Cation channel sperm-associated protein 1 (780 aa).

3 disordered regions span residues 1–37 (MDQN…PGHS), 71–306 (LSSH…QDHH), and 376–412 (QMSK…LQRT). Residues 1–447 (MDQNSVPEKA…EMIRNLTQSL (447 aa)) lie on the Cytoplasmic side of the membrane. Over residues 110 to 122 (SYGEDYHDELQRD) the composition is skewed to basic and acidic residues. Basic residues predominate over residues 211 to 241 (QVPHRGWPHHHQVHHHGRSRHHEAHQHGKSP). Residues 261 to 284 (SDYHSEYHQGDHHPSEYHHGDHPH) show a composition bias toward basic and acidic residues. Basic residues predominate over residues 285-299 (HTQHHYHQTHRHRDY). The segment covering 387–401 (STKHSEDWGKEEGQF) has biased composition (basic and acidic residues). Basic residues predominate over residues 402 to 412 (QKRKTGRLQRT). Residues 448-469 (AFETFIFFVVCLNTVMLVAQTF) form a helical membrane-spanning segment. The Extracellular segment spans residues 470–478 (AEVEIRGEW). A helical membrane pass occupies residues 479-500 (YFMALDSIFFCIYVVEALLKII). Over 501 to 508 (ALGLSYFF) the chain is Cytoplasmic. Residues 509-531 (DFWNNLDFFIMAMAVLDFLLMQT) traverse the membrane as a helical segment. At 532 to 540 (HSFAIYHQS) the chain is on the extracellular side. The chain crosses the membrane as a helical span at residues 541–563 (LFRILKVFKSLRALRAIRVLRRL). The Cytoplasmic portion of the chain corresponds to 564–581 (SFLTSVQEVTGTLGQSLP). A helical transmembrane segment spans residues 582–604 (SIAAILILMFTCLFLFSAVLRAL). The Extracellular segment spans residues 605–615 (FRKSDPKRFQN). Positions 616–628 (IFTTIFTLFTLLT) form an intramembrane region, helical; Pore-forming. Over 629–645 (LDDWSLIYMDSRAQGAW) the chain is Extracellular. A helical membrane pass occupies residues 646 to 671 (YIIPILVIYIIIQYFIFLNLVITVLV). Residues 672–780 (DSFQTALFKG…FEAGEEDFRN (109 aa)) lie on the Cytoplasmic side of the membrane.

Belongs to the cation channel sperm-associated (TC 1.A.1.19) family. In terms of assembly, component of the CatSper complex or CatSpermasome composed of the core pore-forming members CATSPER1, CATSPER2, CATSPER3 and CATSPER4 as well as auxiliary members CATSPERB, CATSPERG, CATSPERD, CATSPERE, CATSPERZ, C2CD6/CATSPERT, TMEM249, TMEM262 and EFCAB9. HSPA1 may be an additional auxiliary complex member. The core complex members CATSPER1, CATSPER2, CATSPER3 and CATSPER4 form a heterotetrameric channel. The auxiliary CATSPERB, CATSPERG, CATSPERD and CATSPERE subunits form a pavilion-like structure over the pore which stabilizes the complex through interactions with CATSPER4, CATSPER3, CATSPER1 and CATSPER2 respectively. TMEM262/CATSPERH interacts with CATSPERB, further stabilizing the complex. C2CD6/CATSPERT interacts at least with CATSPERD and is required for targeting the CatSper complex in the flagellar membrane. Interacts with Ca(v)3.3/CACNA1I, leading to suppression of T-type calcium channel activity. In terms of tissue distribution, testis-specific.

The protein resides in the cell projection. The protein localises to the cilium. Its subcellular location is the flagellum membrane. It carries out the reaction Ca(2+)(in) = Ca(2+)(out). The CatSper calcium channel is indirectly activated by extracellular progesterone and prostaglandins following the sequence: progesterone &gt; PGF1-alpha = PGE1 &gt; PGA1 &gt; PGE2 &gt;&gt; PGD2. The CatSper calcium channel is directly inhibited by endocannabinoid 2-arachidonoylglycerol (2AG). Indirect activation by progesterone takes place via the following mechanism: progesterone binds and activates the acylglycerol lipase ABHD2, which in turn mediates hydrolysis of 2AG inhibitor, relieving inhibition of the CatSper channel. The primary effect of progesterone activation is to shift voltage dependence towards more physiological, negative membrane potentials; it is not mediated by metabotropic receptors and second messengers. Sperm capacitation enhances the effect of progesterone by providing additional negative shift. Also activated by the elevation of intracellular pH. Functionally, pore-forming subunit of the CatSper complex, a sperm-specific voltage-gated calcium channel that plays a central role in calcium-dependent physiological responses essential for successful fertilization, such as sperm hyperactivation, acrosome reaction and chemotaxis towards the oocyte. The polypeptide is Cation channel sperm-associated protein 1 (CATSPER1) (Homo sapiens (Human)).